We begin with the raw amino-acid sequence, 309 residues long: Vomeronasal type-1 receptor 52 (309 aa).

Topologically, residues 1–19 (MNKDHTLYCSVYIRNAFFS) are extracellular. A helical transmembrane segment spans residues 20 to 40 (EIGIGISANSCLLLFHTFMFI). Residues 41–49 (RGHRPRLTD) are Cytoplasmic-facing. The chain crosses the membrane as a helical span at residues 50-70 (LPIGFVALIHLVMLLLAAYIT). Residues 71 to 93 (EDFFMSSGGWDDITCKLVIFLHR) lie on the Extracellular side of the membrane. A disulfide bond links Cys85 and Cys172. Residues 94–114 (FFRSLSVCATCLLSVFQAIIL) traverse the membrane as a helical segment. Over 115 to 134 (CPQSSHLAKLKQNSPHQLSY) the chain is Cytoplasmic. The chain crosses the membrane as a helical span at residues 135–155 (FFIFLSIFYTSISSHILIAAI). Over 156–187 (PTQNITFVNLIYITNSCSFLPLSSSMQHTFST) the chain is Extracellular. An N-linked (GlcNAc...) asparagine glycan is attached at Asn159. The chain crosses the membrane as a helical span at residues 188–208 (LLAFRNVFVIGLMGLSTCYMA). The Cytoplasmic segment spans residues 209-238 (TLLCRHKTRSQRLQNSKLSPKATPEQRALR). Residues 239–259 (TILMLMSFFLLMSTFDSIISY) traverse the membrane as a helical segment. Residues 260–268 (SRTILQGNP) lie on the Extracellular side of the membrane. The helical transmembrane segment at 269–289 (LPFCFQILVAHSYAAVSPLLV) threads the bilayer. Residues 290-309 (LSNEKRITNLLISMYEKIVL) lie on the Cytoplasmic side of the membrane.

This sequence belongs to the G-protein coupled receptor 1 family.

It is found in the cell membrane. Functionally, putative pheromone receptor implicated in the regulation of social and reproductive behavior. The protein is Vomeronasal type-1 receptor 52 (Vmn1r52) of Mus musculus (Mouse).